Reading from the N-terminus, the 207-residue chain is Small ribosomal subunit protein uS4 (207 aa).

Positions 31–55 (KCKLDSKPGQHGRTSGARTSDYGTQ) are disordered. The segment covering 42 to 53 (GRTSGARTSDYG) has biased composition (polar residues). The 64-residue stretch at 97–160 (SRLDNVVYRM…KKQARIVEAL (64 aa)) folds into the S4 RNA-binding domain.

The protein belongs to the universal ribosomal protein uS4 family. Part of the 30S ribosomal subunit. Contacts protein S5. The interaction surface between S4 and S5 is involved in control of translational fidelity.

One of the primary rRNA binding proteins, it binds directly to 16S rRNA where it nucleates assembly of the body of the 30S subunit. In terms of biological role, with S5 and S12 plays an important role in translational accuracy. This is Small ribosomal subunit protein uS4 from Burkholderia thailandensis (strain ATCC 700388 / DSM 13276 / CCUG 48851 / CIP 106301 / E264).